Reading from the N-terminus, the 434-residue chain is DNA primase large subunit PriL (434 aa).

Residues Cys281, Cys392, Cys403, and Cys409 each contribute to the [4Fe-4S] cluster site.

This sequence belongs to the eukaryotic-type primase large subunit family. As to quaternary structure, heterodimer of a small subunit (PriS) and a large subunit (PriL). The cofactor is [4Fe-4S] cluster.

Regulatory subunit of DNA primase, an RNA polymerase that catalyzes the synthesis of short RNA molecules used as primers for DNA polymerase during DNA replication. Stabilizes and modulates the activity of the small subunit, increasing the rate of DNA synthesis, and conferring RNA synthesis capability. The DNA polymerase activity may enable DNA primase to also catalyze primer extension after primer synthesis. May also play a role in DNA repair. The protein is DNA primase large subunit PriL of Methanothermobacter thermautotrophicus (strain ATCC 29096 / DSM 1053 / JCM 10044 / NBRC 100330 / Delta H) (Methanobacterium thermoautotrophicum).